A 72-amino-acid chain; its full sequence is Cold shock-like protein CspD (72 aa).

A CSD domain is found at 4-64 (GIVKWFNNAK…SDKGSHATKI (61 aa)).

It localises to the cytoplasm. The polypeptide is Cold shock-like protein CspD (cspD) (Haemophilus influenzae (strain ATCC 51907 / DSM 11121 / KW20 / Rd)).